Here is a 456-residue protein sequence, read N- to C-terminus: ATP-dependent protease ATPase subunit HslU (456 aa).

ATP contacts are provided by residues valine 18, 60–65 (GVGKTE), aspartate 269, glutamate 334, and arginine 406.

Belongs to the ClpX chaperone family. HslU subfamily. A double ring-shaped homohexamer of HslV is capped on each side by a ring-shaped HslU homohexamer. The assembly of the HslU/HslV complex is dependent on binding of ATP.

The protein localises to the cytoplasm. In terms of biological role, ATPase subunit of a proteasome-like degradation complex; this subunit has chaperone activity. The binding of ATP and its subsequent hydrolysis by HslU are essential for unfolding of protein substrates subsequently hydrolyzed by HslV. HslU recognizes the N-terminal part of its protein substrates and unfolds these before they are guided to HslV for hydrolysis. This is ATP-dependent protease ATPase subunit HslU from Desulfosudis oleivorans (strain DSM 6200 / JCM 39069 / Hxd3) (Desulfococcus oleovorans).